We begin with the raw amino-acid sequence, 363 residues long: Holliday junction branch migration complex subunit RuvB (363 aa).

The tract at residues 1 to 23 (MHKDEDQRLLGPAPLPNDPDRSL) is disordered. Positions 1–184 (MHKDEDQRLL…FGIPIRLNFY (184 aa)) are large ATPase domain (RuvB-L). Residues Leu23, Arg24, Gly65, Lys68, Thr69, Thr70, 131–133 (EDY), Arg174, Tyr184, and Arg221 each bind ATP. Thr69 is a Mg(2+) binding site. A small ATPAse domain (RuvB-S) region spans residues 185–255 (TIEELEYIVQ…IADEALSRLE (71 aa)). Residues 258-363 (HLGLDPLDRR…QTTLWDGEDD (106 aa)) are head domain (RuvB-H). The DNA site is built by Arg294, Arg313, and Arg318.

The protein belongs to the RuvB family. As to quaternary structure, homohexamer. Forms an RuvA(8)-RuvB(12)-Holliday junction (HJ) complex. HJ DNA is sandwiched between 2 RuvA tetramers; dsDNA enters through RuvA and exits via RuvB. An RuvB hexamer assembles on each DNA strand where it exits the tetramer. Each RuvB hexamer is contacted by two RuvA subunits (via domain III) on 2 adjacent RuvB subunits; this complex drives branch migration. In the full resolvosome a probable DNA-RuvA(4)-RuvB(12)-RuvC(2) complex forms which resolves the HJ.

It is found in the cytoplasm. It catalyses the reaction ATP + H2O = ADP + phosphate + H(+). In terms of biological role, the RuvA-RuvB-RuvC complex processes Holliday junction (HJ) DNA during genetic recombination and DNA repair, while the RuvA-RuvB complex plays an important role in the rescue of blocked DNA replication forks via replication fork reversal (RFR). RuvA specifically binds to HJ cruciform DNA, conferring on it an open structure. The RuvB hexamer acts as an ATP-dependent pump, pulling dsDNA into and through the RuvAB complex. RuvB forms 2 homohexamers on either side of HJ DNA bound by 1 or 2 RuvA tetramers; 4 subunits per hexamer contact DNA at a time. Coordinated motions by a converter formed by DNA-disengaged RuvB subunits stimulates ATP hydrolysis and nucleotide exchange. Immobilization of the converter enables RuvB to convert the ATP-contained energy into a lever motion, pulling 2 nucleotides of DNA out of the RuvA tetramer per ATP hydrolyzed, thus driving DNA branch migration. The RuvB motors rotate together with the DNA substrate, which together with the progressing nucleotide cycle form the mechanistic basis for DNA recombination by continuous HJ branch migration. Branch migration allows RuvC to scan DNA until it finds its consensus sequence, where it cleaves and resolves cruciform DNA. The protein is Holliday junction branch migration complex subunit RuvB of Bartonella tribocorum (strain CIP 105476 / IBS 506).